A 498-amino-acid polypeptide reads, in one-letter code: ATP synthase subunit beta, chloroplastic (498 aa).

ATP is bound at residue 172–179 (GGAGVGKT).

It belongs to the ATPase alpha/beta chains family. F-type ATPases have 2 components, CF(1) - the catalytic core - and CF(0) - the membrane proton channel. CF(1) has five subunits: alpha(3), beta(3), gamma(1), delta(1), epsilon(1). CF(0) has four main subunits: a(1), b(1), b'(1) and c(9-12).

It localises to the plastid. The protein resides in the chloroplast thylakoid membrane. The catalysed reaction is ATP + H2O + 4 H(+)(in) = ADP + phosphate + 5 H(+)(out). Functionally, produces ATP from ADP in the presence of a proton gradient across the membrane. The catalytic sites are hosted primarily by the beta subunits. The protein is ATP synthase subunit beta, chloroplastic of Aristolochia macrophylla (Dutchman's pipe vine).